The sequence spans 431 residues: Fibrinogen C domain-containing protein 1 (431 aa).

At 1–3 the chain is on the cytoplasmic side; the sequence is MLC. The chain crosses the membrane as a helical; Signal-anchor for type II membrane protein span at residues 4 to 24; the sequence is TVLLALAVLLAVAVTGAVLFL. The Extracellular portion of the chain corresponds to 25–431; the sequence is NHTHTPGTAP…MKIRPVREDR (407 aa). Residues 205–428 form the Fibrinogen C-terminal domain; that stretch reads CATGSRPRDC…FSEMKIRPVR (224 aa). Cys214 and Cys243 form a disulfide bridge. An N-linked (GlcNAc...) asparagine glycan is attached at Asn310. Residues Asp363 and Asp365 each contribute to the Ca(2+) site. The cysteines at positions 371 and 384 are disulfide-linked.

Homotetramer; disulfide-linked.

The protein resides in the membrane. Acetyl group-binding receptor which shows a high-affinity and calcium-dependent binding to acetylated structures such as chitin, some N-acetylated carbohydrates, and amino acids, but not to their non-acetylated counterparts. Can facilitate the endocytosis of acetylated components. In Macaca fascicularis (Crab-eating macaque), this protein is Fibrinogen C domain-containing protein 1 (FIBCD1).